Here is a 622-residue protein sequence, read N- to C-terminus: Membrane protein insertase YidC (622 aa).

A helical transmembrane segment spans residues 6–26; it reads FIAVVLSVLVLVGASFLQELL. Positions 37–71 are disordered; sequence AEHTLSAVPEETRTQSAHGGAADTQETTQPAAHPS. 4 consecutive transmembrane segments (helical) span residues 413–433, 483–503, 513–533, and 579–599; these read LIPNWGVAIILVTIAIKVLFF, LSGCLPTLVQMPIIFAMYRLF, MFIPYWIPDLSLADSVWTLPF, and VMPLFFFFFFYDAPSGLLVYW.

It belongs to the OXA1/ALB3/YidC family. Type 1 subfamily. In terms of assembly, interacts with the Sec translocase complex via SecD. Specifically interacts with transmembrane segments of nascent integral membrane proteins during membrane integration.

The protein localises to the cell inner membrane. Functionally, required for the insertion and/or proper folding and/or complex formation of integral membrane proteins into the membrane. Involved in integration of membrane proteins that insert both dependently and independently of the Sec translocase complex, as well as at least some lipoproteins. Aids folding of multispanning membrane proteins. The protein is Membrane protein insertase YidC of Treponema pallidum (strain Nichols).